Consider the following 158-residue polypeptide: Transcription elongation factor GreA (158 aa).

Residues 24–43 show a composition bias toward basic and acidic residues; that stretch reads DVERPKASEAIGEARDKGDL. Positions 24 to 47 are disordered; it reads DVERPKASEAIGEARDKGDLSENA. A coiled-coil region spans residues 48-68; the sequence is EYDAAKEAQGLLEMKISKMEE.

It belongs to the GreA/GreB family.

In terms of biological role, necessary for efficient RNA polymerase transcription elongation past template-encoded arresting sites. The arresting sites in DNA have the property of trapping a certain fraction of elongating RNA polymerases that pass through, resulting in locked ternary complexes. Cleavage of the nascent transcript by cleavage factors such as GreA or GreB allows the resumption of elongation from the new 3'terminus. GreA releases sequences of 2 to 3 nucleotides. In Christiangramia forsetii (strain DSM 17595 / CGMCC 1.15422 / KT0803) (Gramella forsetii), this protein is Transcription elongation factor GreA.